Here is a 373-residue protein sequence, read N- to C-terminus: Putative gustatory receptor 10b (373 aa).

Residues 1–8 (MRVGKLCR) are Cytoplasmic-facing. Residues 9 to 29 (LALRFWMGLILVLGFSSHYYN) traverse the membrane as a helical segment. Over 30 to 82 (PTRRRLVYSRILQTYDWLLMVINLGAFYLYYRYAMTYFLEGMFRRQGFVNQVS) the chain is Extracellular. Residues 83–103 (TCNVFQQLLMAVTGTWLHFLF) traverse the membrane as a helical segment. Residues 104–132 (ERHVCQTYNELSRILKHDLKLKEHSRFYC) are Cytoplasmic-facing. Residues 133 to 153 (LAFLAKVYNFFHNFNFALSAI) traverse the membrane as a helical segment. The Extracellular segment spans residues 154–170 (MHWGLRPFNVWDLLANL). A helical transmembrane segment spans residues 171–191 (YFVYNSLARDAILVAYVLLLL). Over 192 to 230 (NLSEALRLNGQQEHDTYSDLMKQLRRRERLLRIGRRVHR) the chain is Cytoplasmic. The chain crosses the membrane as a helical span at residues 231–251 (MFAWLVAIALIYLVFFNTATI). The Extracellular portion of the chain corresponds to 252–273 (YLGYTMFIQKHDALGLRGRGLK). Residues 274 to 294 (MLLTVVSFLVILWDVVLLQVI) traverse the membrane as a helical segment. The Cytoplasmic portion of the chain corresponds to 295-350 (CEKLLAEENKICDCPEDVASSRTTYRQWEMSALRRAITRSSPENNVLGMFRMDMRC). Residues 351 to 371 (AFALISCSLSYGIIIIQIGYI) traverse the membrane as a helical segment. At 372–373 (PG) the chain is on the extracellular side.

It belongs to the insect chemoreceptor superfamily. Gustatory receptor (GR) family. Gr10a subfamily.

The protein resides in the cell membrane. In terms of biological role, probable gustatory receptor which mediates acceptance or avoidance behavior, depending on its substrates. The polypeptide is Putative gustatory receptor 10b (Gr10b) (Drosophila melanogaster (Fruit fly)).